A 423-amino-acid polypeptide reads, in one-letter code: Glutamate-1-semialdehyde 2,1-aminomutase (423 aa).

The residue at position 263 (Lys-263) is an N6-(pyridoxal phosphate)lysine.

Belongs to the class-III pyridoxal-phosphate-dependent aminotransferase family. HemL subfamily. The cofactor is pyridoxal 5'-phosphate.

The protein localises to the cytoplasm. It catalyses the reaction (S)-4-amino-5-oxopentanoate = 5-aminolevulinate. It functions in the pathway porphyrin-containing compound metabolism; protoporphyrin-IX biosynthesis; 5-aminolevulinate from L-glutamyl-tRNA(Glu): step 2/2. This is Glutamate-1-semialdehyde 2,1-aminomutase from Ignicoccus hospitalis (strain KIN4/I / DSM 18386 / JCM 14125).